A 673-amino-acid polypeptide reads, in one-letter code: Synaptotagmin-like protein 4 (673 aa).

Residues 4 to 122 form the RabBD domain; the sequence is ILDLSFLSEM…KATGDWFYDQ (119 aa). An FYVE-type zinc finger spans residues 63-105; sequence CARCQEGLGRLIPKSSTCVGCNHLVCRECRVLESNGSWRCKVC. The disordered stretch occupies residues 184 to 253; the sequence is FEVPKTRSGK…PGNQNAVCGD (70 aa). Phosphoserine occurs at positions 202, 205, 218, 222, and 275. The region spanning 358–480 is the C2 1 domain; the sequence is VTGKIAFSLK…KLDKKLDHCL (123 aa). At Ser490 the chain carries Phosphoserine. Positions 509 to 635 constitute a C2 2 domain; sequence PASKLPVGGD…ISNGEVVDWM (127 aa).

Part of a ternary complex containing STX1A and RAB27A. Can bind both dominant negative and dominant active mutants of RAB27A. Binds STXBP1, RAB3A, RAB8A and RAB27B. Interacts with MYO5A. In terms of tissue distribution, detected in the pancreatic islet, in particular in insulin-positive beta cells, and in pituitary.

It is found in the membrane. It localises to the cytoplasmic vesicle. The protein localises to the secretory vesicle membrane. Its function is as follows. Modulates exocytosis of dense-core granules and secretion of hormones in the pancreas and the pituitary. Interacts with vesicles containing negatively charged phospholipids in a Ca(2+)-independent manner. The polypeptide is Synaptotagmin-like protein 4 (Sytl4) (Mus musculus (Mouse)).